We begin with the raw amino-acid sequence, 137 residues long: Ribosome-binding factor A (137 aa).

This sequence belongs to the RbfA family. In terms of assembly, monomer. Binds 30S ribosomal subunits, but not 50S ribosomal subunits or 70S ribosomes.

Its subcellular location is the cytoplasm. In terms of biological role, one of several proteins that assist in the late maturation steps of the functional core of the 30S ribosomal subunit. Associates with free 30S ribosomal subunits (but not with 30S subunits that are part of 70S ribosomes or polysomes). Required for efficient processing of 16S rRNA. May interact with the 5'-terminal helix region of 16S rRNA. This is Ribosome-binding factor A from Cereibacter sphaeroides (strain ATCC 17029 / ATH 2.4.9) (Rhodobacter sphaeroides).